The chain runs to 485 residues: Adenosylhomocysteinase (485 aa).

3 residues coordinate substrate: threonine 60, aspartate 146, and glutamate 208. 209–211 (TTT) serves as a coordination point for NAD(+). Substrate contacts are provided by lysine 238 and aspartate 242. NAD(+) is bound by residues asparagine 243, 272–277 (GYGDVG), glutamate 295, asparagine 330, 351–353 (IGH), and asparagine 399.

The protein belongs to the adenosylhomocysteinase family. NAD(+) serves as cofactor.

The protein localises to the cytoplasm. It catalyses the reaction S-adenosyl-L-homocysteine + H2O = L-homocysteine + adenosine. It functions in the pathway amino-acid biosynthesis; L-homocysteine biosynthesis; L-homocysteine from S-adenosyl-L-homocysteine: step 1/1. Its function is as follows. May play a key role in the regulation of the intracellular concentration of adenosylhomocysteine. This is Adenosylhomocysteinase from Streptomyces griseus subsp. griseus (strain JCM 4626 / CBS 651.72 / NBRC 13350 / KCC S-0626 / ISP 5235).